We begin with the raw amino-acid sequence, 146 residues long: Ecotin-like protein 1 (146 aa).

The protein belongs to the protease inhibitor I11 (ecotin) family.

The polypeptide is Ecotin-like protein 1 (ISP1) (Leishmania infantum).